We begin with the raw amino-acid sequence, 102 residues long: Glycoprotein 24A (102 aa).

This sequence belongs to the csb family. In terms of processing, O-glycosylated.

The protein localises to the cell surface. Its function is as follows. Cell-cell adhesion during early development. The protein is Glycoprotein 24A (csbA) of Dictyostelium discoideum (Social amoeba).